Consider the following 100-residue polypeptide: Large ribosomal subunit protein eL30 (100 aa).

It belongs to the eukaryotic ribosomal protein eL30 family.

The sequence is that of Large ribosomal subunit protein eL30 from Methanococcus maripaludis (strain DSM 14266 / JCM 13030 / NBRC 101832 / S2 / LL).